A 500-amino-acid chain; its full sequence is Nitrate/nitrite transporter NrtP (500 aa).

Transmembrane regions (helical) follow at residues 19–39 (WFAFFLTFVCWFNFAPFATTI), 52–72 (TLGICNLALTIPARLIIGMLL), 79–99 (ITYSILLMFAVVPCLATALAQ), 109–129 (LLMGIVGSGFVVGIRMVAEWF), 147–167 (FGAFGAEFALPILAISTSFFS), 175–195 (LAIALVGIITAIYGVIYYNTV), 220–240 (SFWAMMISNFGLIFALGLLAW), 247–267 (IHFLTLSQMYLTWLVLAGLFA), 364–384 (WTMTIISVGIGVSYLMAHFIN), 389–409 (IPVAIAVTMFAAYFAQAGCGA), 425–445 (IAGNVGAYGNFGGVVYLTIFS), and 451–471 (TLFSTMGIAALICAFMCAFFL).

The protein belongs to the major facilitator superfamily. Nitrate/nitrite porter (TC 2.A.1.8) family.

It localises to the cell inner membrane. In terms of biological role, transport system for both nitrate and nitrite, with much higher affinity for nitrate than for nitrite. This Nostoc punctiforme (strain ATCC 29133 / PCC 73102) protein is Nitrate/nitrite transporter NrtP.